Here is a 156-residue protein sequence, read N- to C-terminus: D-aminoacyl-tRNA deacylase (156 aa).

The Gly-cisPro motif, important for rejection of L-amino acids signature appears at 137–138; sequence GP.

It belongs to the DTD family. Homodimer.

It localises to the cytoplasm. It carries out the reaction glycyl-tRNA(Ala) + H2O = tRNA(Ala) + glycine + H(+). The catalysed reaction is a D-aminoacyl-tRNA + H2O = a tRNA + a D-alpha-amino acid + H(+). Functionally, an aminoacyl-tRNA editing enzyme that deacylates mischarged D-aminoacyl-tRNAs. Also deacylates mischarged glycyl-tRNA(Ala), protecting cells against glycine mischarging by AlaRS. Acts via tRNA-based rather than protein-based catalysis; rejects L-amino acids rather than detecting D-amino acids in the active site. By recycling D-aminoacyl-tRNA to D-amino acids and free tRNA molecules, this enzyme counteracts the toxicity associated with the formation of D-aminoacyl-tRNA entities in vivo and helps enforce protein L-homochirality. The chain is D-aminoacyl-tRNA deacylase from Dictyoglomus turgidum (strain DSM 6724 / Z-1310).